A 481-amino-acid chain; its full sequence is MTHKERPLDVVILAAGQGTRMKSALPKVLHPVAGRPMVAWAVKAAKALGARDIVVVTGHGAEQVEAALAGSGVRFARQAQQLGTGNAFLVGAEALRHQGDADILVLYGDTPLLRPETLRALLADHRAHNSALTILTAELPDATGYGRILRDADGHVERIVEEKAATPEEKAVREFNSGVYVLDARAPELARRITNDNPAGEYYLTDLLELYRQEGAQVRAFKLHDPDEVMGANDRVQLAQAAAVLRRRINTAHMQAGVTLQDPSTIQIEDTVTLGRDVTLEPGVILRGQTRVADGVTIGAYSVVTDSVLEEGVIVKPHSVLEGAHVGKGSDVGPFARLRPGTVLEESVHIGNFVETKNARLAEGVKAGHLAYLGDVTIGAETNVGAGTIIANFDGVHKHQSTVGAGVFIGSNATLIAPRVIGDAAFIAAGSAVHADVPEGALAIARGKQRTLEGWSRRYWSGMHEGVRKKLPWLAGWLERQ.

The interval 1 to 235 (MTHKERPLDV…PDEVMGANDR (235 aa)) is pyrophosphorylase. UDP-N-acetyl-alpha-D-glucosamine contacts are provided by residues 13–16 (LAAG), K27, Q78, 83–84 (GT), 107–109 (YGD), G146, E161, N176, and N233. D109 provides a ligand contact to Mg(2+). N233 lines the Mg(2+) pocket. The interval 236-256 (VQLAQAAAVLRRRINTAHMQA) is linker. Residues 257–481 (GVTLQDPSTI…PWLAGWLERQ (225 aa)) are N-acetyltransferase. The UDP-N-acetyl-alpha-D-glucosamine site is built by R339 and K357. H369 functions as the Proton acceptor in the catalytic mechanism. Y372 and N383 together coordinate UDP-N-acetyl-alpha-D-glucosamine. 4 residues coordinate acetyl-CoA: A386, S411, A429, and R446.

In the N-terminal section; belongs to the N-acetylglucosamine-1-phosphate uridyltransferase family. This sequence in the C-terminal section; belongs to the transferase hexapeptide repeat family. In terms of assembly, homotrimer. It depends on Mg(2+) as a cofactor.

It is found in the cytoplasm. The catalysed reaction is alpha-D-glucosamine 1-phosphate + acetyl-CoA = N-acetyl-alpha-D-glucosamine 1-phosphate + CoA + H(+). The enzyme catalyses N-acetyl-alpha-D-glucosamine 1-phosphate + UTP + H(+) = UDP-N-acetyl-alpha-D-glucosamine + diphosphate. It participates in nucleotide-sugar biosynthesis; UDP-N-acetyl-alpha-D-glucosamine biosynthesis; N-acetyl-alpha-D-glucosamine 1-phosphate from alpha-D-glucosamine 6-phosphate (route II): step 2/2. The protein operates within nucleotide-sugar biosynthesis; UDP-N-acetyl-alpha-D-glucosamine biosynthesis; UDP-N-acetyl-alpha-D-glucosamine from N-acetyl-alpha-D-glucosamine 1-phosphate: step 1/1. Its pathway is bacterial outer membrane biogenesis; LPS lipid A biosynthesis. In terms of biological role, catalyzes the last two sequential reactions in the de novo biosynthetic pathway for UDP-N-acetylglucosamine (UDP-GlcNAc). The C-terminal domain catalyzes the transfer of acetyl group from acetyl coenzyme A to glucosamine-1-phosphate (GlcN-1-P) to produce N-acetylglucosamine-1-phosphate (GlcNAc-1-P), which is converted into UDP-GlcNAc by the transfer of uridine 5-monophosphate (from uridine 5-triphosphate), a reaction catalyzed by the N-terminal domain. The protein is Bifunctional protein GlmU of Deinococcus geothermalis (strain DSM 11300 / CIP 105573 / AG-3a).